Consider the following 351-residue polypeptide: Glycerol-1-phosphate dehydrogenase [NAD(P)+] (351 aa).

Residues 97-101 (GKVID) and 119-122 (TSPS) each bind NAD(+). Asp-124 is a substrate binding site. Ser-128 is an NAD(+) binding site. Asp-171 contacts substrate. Zn(2+)-binding residues include Asp-171 and His-251. His-255 contacts substrate. His-267 provides a ligand contact to Zn(2+).

This sequence belongs to the glycerol-1-phosphate dehydrogenase family. In terms of assembly, homodimer. It depends on Zn(2+) as a cofactor.

The protein localises to the cytoplasm. It catalyses the reaction sn-glycerol 1-phosphate + NAD(+) = dihydroxyacetone phosphate + NADH + H(+). It carries out the reaction sn-glycerol 1-phosphate + NADP(+) = dihydroxyacetone phosphate + NADPH + H(+). Its pathway is membrane lipid metabolism; glycerophospholipid metabolism. Functionally, catalyzes the NAD(P)H-dependent reduction of dihydroxyacetonephosphate (DHAP or glycerone phosphate) to glycerol 1-phosphate (G1P). The G1P thus generated is used as the glycerophosphate backbone of phospholipids in the cellular membranes of Archaea. This Saccharolobus solfataricus (strain ATCC 35092 / DSM 1617 / JCM 11322 / P2) (Sulfolobus solfataricus) protein is Glycerol-1-phosphate dehydrogenase [NAD(P)+].